Here is a 315-residue protein sequence, read N- to C-terminus: Acyl transferase (315 aa).

Catalysis depends on charge relay system residues S116, D213, and H243.

This sequence belongs to the LuxD family.

It participates in lipid metabolism; fatty acid reduction for biolumincescence. Functionally, acyl transferase is part of the fatty acid reductase system required for aldehyde biosynthesis; it produces fatty acids for the luminescent reaction. In Photobacterium leiognathi, this protein is Acyl transferase.